The chain runs to 881 residues: Lon protease (881 aa).

Positions 1-24 (MAKNTDIEHDAHEPAGHGDVRESA) are enriched in basic and acidic residues. Residues 1 to 77 (MAKNTDIEHD…RAGEAEKGVP (77 aa)) form a disordered region. Positions 49-59 (QTDTESAQGAA) are enriched in polar residues. The segment covering 65–77 (EVQRAGEAEKGVP) has biased composition (basic and acidic residues). Residues 94–287 (VHLIPLTGRP…EVFVYIKKEK (194 aa)) form the Lon N-terminal domain. 440–447 (GPPGVGKT) provides a ligand contact to ATP. Residues 679 to 861 (ANKVGTAVGL…EEVLSLAFPK (183 aa)) enclose the Lon proteolytic domain. Residues Ser767 and Lys810 contribute to the active site.

The protein belongs to the peptidase S16 family. As to quaternary structure, homohexamer. Organized in a ring with a central cavity.

It is found in the cytoplasm. The catalysed reaction is Hydrolysis of proteins in presence of ATP.. Its function is as follows. ATP-dependent serine protease that mediates the selective degradation of mutant and abnormal proteins as well as certain short-lived regulatory proteins. Required for cellular homeostasis and for survival from DNA damage and developmental changes induced by stress. Degrades polypeptides processively to yield small peptide fragments that are 5 to 10 amino acids long. Binds to DNA in a double-stranded, site-specific manner. This is Lon protease from Treponema pallidum (strain Nichols).